The primary structure comprises 379 residues: 8-amino-7-oxononanoate synthase (379 aa).

Substrate is bound by residues Arg-27 and Arg-34. A pyridoxal 5'-phosphate-binding site is contributed by Gly-114–Tyr-115. Substrate is bound at residue His-139. Pyridoxal 5'-phosphate is bound by residues Ser-187, Asp-212 to His-215, and Thr-232 to Lys-235. An N6-(pyridoxal phosphate)lysine modification is found at Lys-235. Residue Thr-344 participates in substrate binding.

The protein belongs to the class-II pyridoxal-phosphate-dependent aminotransferase family. BioF subfamily. As to quaternary structure, homodimer. Pyridoxal 5'-phosphate serves as cofactor.

It carries out the reaction 6-carboxyhexanoyl-[ACP] + L-alanine + H(+) = (8S)-8-amino-7-oxononanoate + holo-[ACP] + CO2. It functions in the pathway cofactor biosynthesis; biotin biosynthesis. Catalyzes the decarboxylative condensation of pimeloyl-[acyl-carrier protein] and L-alanine to produce 8-amino-7-oxononanoate (AON), [acyl-carrier protein], and carbon dioxide. The chain is 8-amino-7-oxononanoate synthase from Methylobacterium sp. (strain 4-46).